The following is a 66-amino-acid chain: Photosystem II reaction center protein J (66 aa).

A disordered region spans residues 1–27 (MSGKKSGLPDGRVPDRNPDGTPAVPWK). The helical transmembrane segment at 37–57 (LWLVATAGGMAVMFVVGLFFY) threads the bilayer.

The protein belongs to the PsbJ family. PSII is composed of 1 copy each of membrane proteins PsbA, PsbB, PsbC, PsbD, PsbE, PsbF, PsbH, PsbI, PsbJ, PsbK, PsbL, PsbM, PsbT, PsbX, PsbY, PsbZ, Psb30/Ycf12, peripheral proteins PsbO, CyanoQ (PsbQ), PsbU, PsbV and a large number of cofactors. It forms dimeric complexes.

It is found in the cellular thylakoid membrane. In terms of biological role, one of the components of the core complex of photosystem II (PSII). PSII is a light-driven water:plastoquinone oxidoreductase that uses light energy to abstract electrons from H(2)O, generating O(2) and a proton gradient subsequently used for ATP formation. It consists of a core antenna complex that captures photons, and an electron transfer chain that converts photonic excitation into a charge separation. In Synechococcus sp. (strain RCC307), this protein is Photosystem II reaction center protein J.